Reading from the N-terminus, the 417-residue chain is Serine hydroxymethyltransferase (417 aa).

Residues L122 and G126–L128 contribute to the (6S)-5,6,7,8-tetrahydrofolate site. K230 is subject to N6-(pyridoxal phosphate)lysine. S355–F357 lines the (6S)-5,6,7,8-tetrahydrofolate pocket.

Belongs to the SHMT family. In terms of assembly, homodimer. It depends on pyridoxal 5'-phosphate as a cofactor.

The protein localises to the cytoplasm. The catalysed reaction is (6R)-5,10-methylene-5,6,7,8-tetrahydrofolate + glycine + H2O = (6S)-5,6,7,8-tetrahydrofolate + L-serine. The protein operates within one-carbon metabolism; tetrahydrofolate interconversion. It participates in amino-acid biosynthesis; glycine biosynthesis; glycine from L-serine: step 1/1. Functionally, catalyzes the reversible interconversion of serine and glycine with tetrahydrofolate (THF) serving as the one-carbon carrier. This reaction serves as the major source of one-carbon groups required for the biosynthesis of purines, thymidylate, methionine, and other important biomolecules. Also exhibits THF-independent aldolase activity toward beta-hydroxyamino acids, producing glycine and aldehydes, via a retro-aldol mechanism. This is Serine hydroxymethyltransferase from Francisella tularensis subsp. mediasiatica (strain FSC147).